The sequence spans 585 residues: MTKNVKKNIKDEINIIVTNLALSKNIKLDEININIQKPPKSDLGDISILIFELSKTLKLPIETISEEIIKALKAKYEIKAMGPYLNIKIPRKEYIHNTIQMVNAQKDTYGTSKYLDNKKIILEFSSPNTNKPLHVGHLRNDVIGESLSRILKAVGAKIIKLNLINDRGVHICKSMLAYKKFGNEITPEKAFKKGDHFIGDFYVQYNKYAQENENAEEEIQDLLLKWEQKDASTIELWKKLNNWAIEGIKETYKITNTSFDKIYLESEIFEIGKNVVLEGLEKGFCYKREDGAICIDLPLDSDEKTDTKVKQKVLIRSNGTSIYLTQDLGNIAVRIKEFNFEEMIYVVGSEQIQHFKNLFFVSEKLGISKNKKLFHLSHGMVNLVDGKMKSREGNVIDGDNLILDLMESILPEITQKIENKENAKKNALDIALGAIHYYLLKSAIHKDIVFNKKESLSFTGNSGPYIQYVGARINSILEKYNTLSIPIIKKINFELLEHEKEWDIIKIISELEENIIKAAKDLNPSILTSYSYSLAKHFSAYYQEVRVIDINNIDLTAARIEFLKAILQTIKNCMYLLNIPYMLKM.

Positions 127–137 match the 'HIGH' region motif; sequence PNTNKPLHVGH.

The protein belongs to the class-I aminoacyl-tRNA synthetase family. Monomer.

It is found in the cytoplasm. The catalysed reaction is tRNA(Arg) + L-arginine + ATP = L-arginyl-tRNA(Arg) + AMP + diphosphate. The sequence is that of Arginine--tRNA ligase from Borreliella afzelii (strain PKo) (Borrelia afzelii).